The primary structure comprises 466 residues: Cysteine--tRNA ligase (466 aa).

Residue Cys29 coordinates Zn(2+). Residues 31–41 carry the 'HIGH' region motif; the sequence is ATVQAPPHIGH. The Zn(2+) site is built by Cys211, His236, and Glu240. The short motif at 267–271 is the 'KMSKS' region element; it reads KMSKS. Lys270 serves as a coordination point for ATP.

The protein belongs to the class-I aminoacyl-tRNA synthetase family. In terms of assembly, monomer. The cofactor is Zn(2+).

It localises to the cytoplasm. It carries out the reaction tRNA(Cys) + L-cysteine + ATP = L-cysteinyl-tRNA(Cys) + AMP + diphosphate. The polypeptide is Cysteine--tRNA ligase (Thermobifida fusca (strain YX)).